The primary structure comprises 244 residues: uncharacterized protein (244 aa).

A disordered region spans residues 1–127 (MSGPQGSDPR…YPGQYGPYGQ (127 aa)). A compositionally biased stretch (polar residues) spans 34-43 (WQQQPTQEAT). 2 stretches are compositionally biased toward low complexity: residues 45 to 75 (QAPA…YAQP) and 88 to 127 (PGQY…PYGQ). Residues 136–156 (VAVIGGVIAVMAVLFIGAVLI) form a helical membrane-spanning segment.

Its subcellular location is the membrane. This is an uncharacterized protein from Mycobacterium tuberculosis (strain CDC 1551 / Oshkosh).